Consider the following 143-residue polypeptide: Large ribosomal subunit protein uL11 (143 aa).

Belongs to the universal ribosomal protein uL11 family. Part of the ribosomal stalk of the 50S ribosomal subunit. Interacts with L10 and the large rRNA to form the base of the stalk. L10 forms an elongated spine to which L12 dimers bind in a sequential fashion forming a multimeric L10(L12)X complex. One or more lysine residues are methylated.

Forms part of the ribosomal stalk which helps the ribosome interact with GTP-bound translation factors. The protein is Large ribosomal subunit protein uL11 of Methylibium petroleiphilum (strain ATCC BAA-1232 / LMG 22953 / PM1).